We begin with the raw amino-acid sequence, 250 residues long: Small ribosomal subunit protein uS3 (250 aa).

The KH type-2 domain maps to 39-111 (IRTLIKNNYP…KVQINIFEVK (73 aa)).

The protein belongs to the universal ribosomal protein uS3 family. As to quaternary structure, part of the 30S ribosomal subunit. Forms a tight complex with proteins S10 and S14.

In terms of biological role, binds the lower part of the 30S subunit head. Binds mRNA in the 70S ribosome, positioning it for translation. In Alder yellows phytoplasma, this protein is Small ribosomal subunit protein uS3.